The following is a 435-amino-acid chain: Mitochondrial association factor 1 form a1 (435 aa).

An N-terminal signal peptide occupies residues 1 to 20; that stretch reads MWRIWRCRLSFLFATGCLLG. At 21–95 the chain is on the vacuolar side; it reads ALTAGLGSQM…SVTARRRRNR (75 aa). A disordered region spans residues 43 to 88; the sequence is GVADASQEAGDVVEERTERTEEQVFAPGPPRRHSSESLFPRNASVT. Positions 55 to 64 are enriched in basic and acidic residues; that stretch reads VEERTERTEE. The chain crosses the membrane as a helical span at residues 96 to 116; that stretch reads RIAPIATAVGVAVILAALYVL. At 117–435 the chain is on the cytoplasmic side; sequence RRRRAQPPQE…ERKYKFPQGD (319 aa). Residues 120-162 are disordered; sequence RAQPPQEPEPPTRLRTPRPRAPSEQQQPSESEPPAEVPMTPDP. Positions 141-153 are enriched in low complexity; it reads PSEQQQPSESEPP.

In terms of assembly, interacts with host SAMM50.

Its subcellular location is the parasitophorous vacuole membrane. Its function is as follows. During host cell infection by tachyzoites, does not play a role in tethering the parasitophorous vacuole to the host mitochondria, probably because it does not bind host mitochondrial import protein TOMM70. This Toxoplasma gondii protein is Mitochondrial association factor 1 form a1.